Consider the following 300-residue polypeptide: Transcription termination/antitermination protein NusG (300 aa).

The disordered stretch occupies residues 1–99 (MSDPNVNDAI…EAEEPELDPI (99 aa)). Composition is skewed to acidic residues over residues 14-41 (ESVE…EAAD) and 47-97 (ETDE…PELD).

This sequence belongs to the NusG family.

Its function is as follows. Participates in transcription elongation, termination and antitermination. This Streptomyces coelicolor (strain ATCC BAA-471 / A3(2) / M145) protein is Transcription termination/antitermination protein NusG.